The sequence spans 127 residues: Flagellar hook-basal body complex protein FliE (127 aa).

This sequence belongs to the FliE family.

Its subcellular location is the bacterial flagellum basal body. The protein is Flagellar hook-basal body complex protein FliE of Leptospira interrogans serogroup Icterohaemorrhagiae serovar copenhageni (strain Fiocruz L1-130).